Here is a 447-residue protein sequence, read N- to C-terminus: Tubulin beta-5 chain (447 aa).

Residues Q11, E69, S138, G142, T143, G144, N204, and N226 each contribute to the GTP site. E69 contacts Mg(2+). The segment at 421–447 is disordered; the sequence is EYQQYQDATADDEEEDYGDEEEDEVAA. A compositionally biased stretch (acidic residues) spans 429-447; sequence TADDEEEDYGDEEEDEVAA.

It belongs to the tubulin family. Dimer of alpha and beta chains. A typical microtubule is a hollow water-filled tube with an outer diameter of 25 nm and an inner diameter of 15 nM. Alpha-beta heterodimers associate head-to-tail to form protofilaments running lengthwise along the microtubule wall with the beta-tubulin subunit facing the microtubule plus end conferring a structural polarity. Microtubules usually have 13 protofilaments but different protofilament numbers can be found in some organisms and specialized cells. The cofactor is Mg(2+). Expressed in roots, leaf sheaths, and suspension cultured cells.

Its subcellular location is the cytoplasm. It is found in the cytoskeleton. Tubulin is the major constituent of microtubules, a cylinder consisting of laterally associated linear protofilaments composed of alpha- and beta-tubulin heterodimers. Microtubules grow by the addition of GTP-tubulin dimers to the microtubule end, where a stabilizing cap forms. Below the cap, tubulin dimers are in GDP-bound state, owing to GTPase activity of alpha-tubulin. The polypeptide is Tubulin beta-5 chain (TUBB5) (Oryza sativa subsp. japonica (Rice)).